A 65-amino-acid chain; its full sequence is Large ribosomal subunit protein uL29 (65 aa).

It belongs to the universal ribosomal protein uL29 family.

This chain is Large ribosomal subunit protein uL29, found in Acinetobacter baumannii (strain AB307-0294).